A 182-amino-acid polypeptide reads, in one-letter code: MALDAVVEDILATSKSKVAEINAETEQEVARILSEARERAAEIKSRKEAEAKHDIEALVRREMSSANLELKRAELNVHKEVLEQVRIKFLDAVTNLPKDKNEALIKKLLEPYDLKDMKVYSSKRDQAFVSSLVPNYGGTLDIIGGVVVESKDGSVRFDHSYETLARDIFNAKVKEVSKLLFG.

This sequence belongs to the V-ATPase E subunit family. In terms of assembly, has multiple subunits with at least A(3), B(3), C, D, E, F, H, I and proteolipid K(x).

Its subcellular location is the cell membrane. In terms of biological role, component of the A-type ATP synthase that produces ATP from ADP in the presence of a proton gradient across the membrane. The sequence is that of A-type ATP synthase subunit E from Methanothrix thermoacetophila (strain DSM 6194 / JCM 14653 / NBRC 101360 / PT) (Methanosaeta thermophila).